The primary structure comprises 469 residues: Asparagine--tRNA ligase (469 aa).

The protein belongs to the class-II aminoacyl-tRNA synthetase family. As to quaternary structure, homodimer.

It localises to the cytoplasm. It catalyses the reaction tRNA(Asn) + L-asparagine + ATP = L-asparaginyl-tRNA(Asn) + AMP + diphosphate + H(+). The chain is Asparagine--tRNA ligase from Porphyromonas gingivalis (strain ATCC BAA-308 / W83).